The primary structure comprises 269 residues: 3-methyl-2-oxobutanoate hydroxymethyltransferase (269 aa).

Mg(2+) is bound by residues Asp42 and Asp81. Residues 42–43 (DS), Asp81, and Lys111 contribute to the 3-methyl-2-oxobutanoate site. Position 113 (Glu113) interacts with Mg(2+). Glu179 functions as the Proton acceptor in the catalytic mechanism. The segment at 250-269 (SGEFPRESHSHTEDELDDLY) is disordered. The segment covering 252–262 (EFPRESHSHTE) has biased composition (basic and acidic residues).

This sequence belongs to the PanB family. In terms of assembly, homodecamer; pentamer of dimers. Requires Mg(2+) as cofactor.

The protein localises to the cytoplasm. The catalysed reaction is 3-methyl-2-oxobutanoate + (6R)-5,10-methylene-5,6,7,8-tetrahydrofolate + H2O = 2-dehydropantoate + (6S)-5,6,7,8-tetrahydrofolate. It participates in cofactor biosynthesis; coenzyme A biosynthesis. In terms of biological role, catalyzes the reversible reaction in which hydroxymethyl group from 5,10-methylenetetrahydrofolate is transferred onto alpha-ketoisovalerate to form ketopantoate. This is 3-methyl-2-oxobutanoate hydroxymethyltransferase from Haloarcula marismortui (strain ATCC 43049 / DSM 3752 / JCM 8966 / VKM B-1809) (Halobacterium marismortui).